We begin with the raw amino-acid sequence, 423 residues long: Serine hydroxymethyltransferase (423 aa).

121-123 serves as a coordination point for (6S)-5,6,7,8-tetrahydrofolate; the sequence is GHI. Lys-227 carries the N6-(pyridoxal phosphate)lysine modification. Glu-242 is a binding site for (6S)-5,6,7,8-tetrahydrofolate.

It belongs to the SHMT family. In terms of assembly, homodimer. Requires pyridoxal 5'-phosphate as cofactor.

It localises to the cytoplasm. It carries out the reaction 5,10-methylenetetrahydromethanopterin + glycine + H2O = 5,6,7,8-tetrahydromethanopterin + L-serine. The protein operates within amino-acid biosynthesis; glycine biosynthesis; glycine from L-serine: step 1/1. Its function is as follows. Catalyzes the reversible interconversion of serine and glycine with tetrahydromethanopterin (H4MPT) serving as the one-carbon carrier. Also exhibits a pteridine-independent aldolase activity toward beta-hydroxyamino acids, producing glycine and aldehydes, via a retro-aldol mechanism. This is Serine hydroxymethyltransferase from Methanothermobacter marburgensis (strain ATCC BAA-927 / DSM 2133 / JCM 14651 / NBRC 100331 / OCM 82 / Marburg) (Methanobacterium thermoautotrophicum).